We begin with the raw amino-acid sequence, 286 residues long: Shikimate dehydrogenase (NADP(+)) (286 aa).

Shikimate is bound by residues 19-21 (SVS) and Thr-66. Lys-70 (proton acceptor) is an active-site residue. Asn-91 and Asp-106 together coordinate shikimate. NADP(+)-binding positions include 130–134 (GAGGS) and Ala-225. Tyr-227 contributes to the shikimate binding site. Gly-248 lines the NADP(+) pocket.

Belongs to the shikimate dehydrogenase family. In terms of assembly, homodimer.

The catalysed reaction is shikimate + NADP(+) = 3-dehydroshikimate + NADPH + H(+). It functions in the pathway metabolic intermediate biosynthesis; chorismate biosynthesis; chorismate from D-erythrose 4-phosphate and phosphoenolpyruvate: step 4/7. Its function is as follows. Involved in the biosynthesis of the chorismate, which leads to the biosynthesis of aromatic amino acids. Catalyzes the reversible NADPH linked reduction of 3-dehydroshikimate (DHSA) to yield shikimate (SA). The polypeptide is Shikimate dehydrogenase (NADP(+)) (Dehalococcoides mccartyi (strain ATCC BAA-2266 / KCTC 15142 / 195) (Dehalococcoides ethenogenes (strain 195))).